We begin with the raw amino-acid sequence, 1262 residues long: Isoleucine--tRNA ligase, cytoplasmic (1262 aa).

M1 is modified (N-acetylmethionine). A 'HIGH' region motif is present at residues 48-58 (PFATGLPHYGH). Positions 600-604 (KMSKR) match the 'KMSKS' region motif. An ATP-binding site is contributed by K603. S1049 carries the phosphoserine modification. T1058 carries the phosphothreonine modification.

The protein belongs to the class-I aminoacyl-tRNA synthetase family. As to quaternary structure, part of a multisubunit complex that groups tRNA ligases for Arg (RARS1), Asp (DARS1), Gln (QARS1), Ile (IARS1), Leu (LARS1), Lys (KARS1), Met (MARS1) the bifunctional ligase for Glu and Pro (EPRS1) and the auxiliary subunits AIMP1/p43, AIMP2/p38 and EEF1E1/p18.

It is found in the cytoplasm. It localises to the cytosol. The catalysed reaction is tRNA(Ile) + L-isoleucine + ATP = L-isoleucyl-tRNA(Ile) + AMP + diphosphate. In terms of biological role, catalyzes the specific attachment of an amino acid to its cognate tRNA in a 2 step reaction: the amino acid (AA) is first activated by ATP to form AA-AMP and then transferred to the acceptor end of the tRNA. In Mus musculus (Mouse), this protein is Isoleucine--tRNA ligase, cytoplasmic (Iars1).